The following is a 400-amino-acid chain: Large envelope protein (400 aa).

Methionine 1 bears the N-acetylmethionine mark. 3 disordered regions span residues 1 to 53 (MGGW…DHWP), 88 to 118 (VPVA…SHPQ), and 145 to 169 (GSSS…SRTG). The N-myristoyl glycine; by host moiety is linked to residue glycine 2. Residues 2–119 (GGWSSKPRQG…PPLRDSHPQA (118 aa)) are pre-S1. The interval 2–174 (GGWSSKPRQG…SSRTGDPAPN (173 aa)) is pre-S. At 2–181 (GGWSSKPRQG…APNMENTTSG (180 aa)) the chain is on the virion surface; in external conformation side. Topologically, residues 2-253 (GGWSSKPRQG…PGYRWMCLRR (252 aa)) are intravirion; in internal conformation. A glycan (N-linked (GlcNAc...) asparagine) is linked at tryptophan 4. Residues 96 to 106 (STNRQSGRQPT) are compositionally biased toward polar residues. The interval 120-174 (MQWNSTTFHQALLDPRVRGLYFPAGGSSSGTVNPVPTTASPISSISSRTGDPAPN) is pre-S2. A compositionally biased stretch (low complexity) spans 155 to 166 (PTTASPISSISS). Residues 182–202 (FLGPLLVLQAGFFLLTRILTI) form a helical membrane-spanning segment. Residues 203–253 (PQSLDSWWTSLNFLGGAPTCPGQNSQSPTSNHSPTSCPPICPGYRWMCLRR) are Intravirion; in external conformation-facing. The chain crosses the membrane as a helical span at residues 254 to 274 (FIIFLFILLLCLIFLLVLLDY). Over 275 to 348 (QGMLPVCPLL…GASVRFSWLS (74 aa)) the chain is Virion surface. Asparagine 320 carries N-linked (GlcNAc...) asparagine; by host glycosylation. The helical transmembrane segment at 349-369 (LLVPFVQWFVGLSPTVWLSVI) threads the bilayer. The Intravirion segment spans residues 370-375 (WMMWYW). Residues 376-398 (GPSLYNILSPFLPLLPIFFCLWV) traverse the membrane as a helical segment. At 399-400 (YI) the chain is on the virion surface side.

The protein belongs to the orthohepadnavirus major surface antigen family. As to quaternary structure, in its internal form (Li-HBsAg), interacts with the capsid protein and with the isoform S. Interacts with host chaperone CANX. Associates with host chaperone CANX through its pre-S2 N glycan; this association may be essential for isoform M proper secretion. In terms of assembly, interacts with isoform L. Interacts with the antigens of satellite virus HDV (HDVAgs); this interaction is required for encapsidation of HDV genomic RNA. Post-translationally, isoform M is N-terminally acetylated by host at a ratio of 90%, and N-glycosylated by host at the pre-S2 region. In terms of processing, myristoylated.

It is found in the virion membrane. In terms of biological role, the large envelope protein exists in two topological conformations, one which is termed 'external' or Le-HBsAg and the other 'internal' or Li-HBsAg. In its external conformation the protein attaches the virus to cell receptors and thereby initiating infection. This interaction determines the species specificity and liver tropism. This attachment induces virion internalization predominantly through caveolin-mediated endocytosis. The large envelope protein also assures fusion between virion membrane and endosomal membrane. In its internal conformation the protein plays a role in virion morphogenesis and mediates the contact with the nucleocapsid like a matrix protein. Its function is as follows. The middle envelope protein plays an important role in the budding of the virion. It is involved in the induction of budding in a nucleocapsid independent way. In this process the majority of envelope proteins bud to form subviral lipoprotein particles of 22 nm of diameter that do not contain a nucleocapsid. In Hepatitis B virus genotype C subtype adr (strain Japan/adr4/1983) (HBV-C), this protein is Large envelope protein.